The primary structure comprises 410 residues: TNF receptor-associated factor family protein DDB_G0279745 (410 aa).

Residues 27–67 (CVICSFPLFDGLQCKRGHGACKSCWEKIIGENGKKECHSCR) form an RING-type; degenerate zinc finger. 2 consecutive TRAF-type zinc fingers follow at residues 81-154 (YLEK…SLEQ) and 154-213 (QHQN…DESI). Residues 216 to 284 (LSNSIVEIQK…SMINKLDDSA (69 aa)) adopt a coiled-coil conformation.

Belongs to the TNF receptor-associated factor family.

It localises to the cytoplasm. Functionally, probable adapter protein and signal transducer that links members of the tumor necrosis factor receptor family to different signaling pathways by association with the receptor cytoplasmic domain and kinases. The sequence is that of TNF receptor-associated factor family protein DDB_G0279745 from Dictyostelium discoideum (Social amoeba).